We begin with the raw amino-acid sequence, 761 residues long: Phosphoribosylformylglycinamidine synthase subunit PurL (761 aa).

H58 is an active-site residue. ATP is bound by residues Y61 and K105. E107 lines the Mg(2+) pocket. Residues 108-111 (SHNH) and R130 contribute to the substrate site. H109 acts as the Proton acceptor in catalysis. A Mg(2+)-binding site is contributed by D131. Q259 is a substrate binding site. D287 contacts Mg(2+). Substrate is bound at residue 331 to 333 (ESQ). ATP contacts are provided by N519 and G556. Position 557 (N557) interacts with Mg(2+). S559 contacts substrate.

It belongs to the FGAMS family. Monomer. Part of the FGAM synthase complex composed of 1 PurL, 1 PurQ and 2 PurS subunits.

It is found in the cytoplasm. The catalysed reaction is N(2)-formyl-N(1)-(5-phospho-beta-D-ribosyl)glycinamide + L-glutamine + ATP + H2O = 2-formamido-N(1)-(5-O-phospho-beta-D-ribosyl)acetamidine + L-glutamate + ADP + phosphate + H(+). Its pathway is purine metabolism; IMP biosynthesis via de novo pathway; 5-amino-1-(5-phospho-D-ribosyl)imidazole from N(2)-formyl-N(1)-(5-phospho-D-ribosyl)glycinamide: step 1/2. Its function is as follows. Part of the phosphoribosylformylglycinamidine synthase complex involved in the purines biosynthetic pathway. Catalyzes the ATP-dependent conversion of formylglycinamide ribonucleotide (FGAR) and glutamine to yield formylglycinamidine ribonucleotide (FGAM) and glutamate. The FGAM synthase complex is composed of three subunits. PurQ produces an ammonia molecule by converting glutamine to glutamate. PurL transfers the ammonia molecule to FGAR to form FGAM in an ATP-dependent manner. PurS interacts with PurQ and PurL and is thought to assist in the transfer of the ammonia molecule from PurQ to PurL. In Rhodococcus opacus (strain B4), this protein is Phosphoribosylformylglycinamidine synthase subunit PurL.